Consider the following 206-residue polypeptide: MVSGSGICSKRVVVDARHHMCGRLASIIAKELLNGQSVVVVRCEEICLSGGLVRQKMKYMRFLRKRMNTKPSHGPIHFRAPSKIFWRTVRGMIPHKTKRGAAALARLKVFEGVPPPYDKVKRMVIPDALKVLRLQAGHKYCLLGRLSSEVGWNHYDTIKELEVKRKERSQALYERKKQLTKLRAKAEKVAEEKLGSQLDVLASIKY.

Belongs to the universal ribosomal protein uL13 family.

In Arabidopsis thaliana (Mouse-ear cress), this protein is Large ribosomal subunit protein uL13y (RPL13AB).